A 337-amino-acid polypeptide reads, in one-letter code: RAD51-associated protein 1 (337 aa).

2 disordered regions span residues 1 to 69 (MVRP…PPKK) and 88 to 337 (LSVK…SQVR). 2 positions are modified to phosphoserine: Ser19 and Ser23. Residues 28-38 (ISSSTPVNKSK) show a composition bias toward polar residues. Residues 32 to 50 (TPVNKSKTVPKVLKQDKPK) are interaction with DNA. A compositionally biased stretch (basic and acidic residues) spans 44-69 (LKQDKPKPNLKNLQKEEVLPTEPPKK). Ser103 and Ser107 each carry phosphoserine. Basic and acidic residues predominate over residues 105 to 118 (EKSTDKQGKEKTEN). Residues 138–143 (LDKITE) carry the SIM motif motif. The segment covering 190–205 (SESDPDFDESKESDED) has biased composition (acidic residues). Residues 225 to 286 (GEKKERKSKP…PSAESKRPKW (62 aa)) are interaction with DNA. Residue Lys251 forms a Glycyl lysine isopeptide (Lys-Gly) (interchain with G-Cter in SUMO; alternate) linkage. A Glycyl lysine isopeptide (Lys-Gly) (interchain with G-Cter in ubiquitin; alternate) cross-link involves residue Lys251. Residues 286–289 (WVPP) carry the WVPP motif motif. Positions 290 to 304 (AASGSRNSSSNALAG) are enriched in low complexity. An interaction with RAD51 region spans residues 295–334 (RNSSSNALAGTPAKSPSQSLRLGLSRLAPVKRLHPSATSS). Phosphoserine is present on Ser309.

Monomer; elongated monodisperse monomer. Interacts (via C-terminal region) with RAD51; the interaction is direct. Interacts (via SIM motif) with WDR48/UAF1; WDR48/UAF1 and RAD51AP1 cooperate together to stimulate RAD51-mediated homologous recombination (HR). Interacts (via WVPP motif) with DMC1; the interaction is direct. Interacts with PALB2. Interacts with RAD52. Sumoylation with SUMO2/3 by NSMCE2/MMS21 promotes stabilization, possibly by preventing ubiquitination. Most abundantly expressed in testis. Also expressed in spleen, thymus and bone marrow. Not detected in heart, kidney or liver.

The protein localises to the chromosome. It localises to the nucleus. Its subcellular location is the telomere. In terms of biological role, structure-specific DNA-binding protein involved in DNA repair by promoting RAD51-mediated homologous recombination. Acts by stimulating D-Loop formation by RAD51: specifically enhances joint molecule formation through its structure-specific DNA interaction and its interaction with RAD51. Binds single-stranded DNA (ssDNA), double-stranded DNA (dsDNA) and secondary DNA structures, such as D-loop structures: has a strong preference for branched-DNA structures that are obligatory intermediates during joint molecule formation. Cooperates with WDR48/UAF1 to stimulate RAD51-mediated homologous recombination: both WDR48/UAF1 and RAD51AP1 have coordinated role in DNA-binding during homologous recombination and DNA repair. WDR48/UAF1 and RAD51AP1 also have a coordinated role in DNA-binding to promote USP1-mediated deubiquitination of FANCD2. Also involved in meiosis by promoting DMC1-mediated homologous meiotic recombination. The sequence is that of RAD51-associated protein 1 from Mus musculus (Mouse).